A 647-amino-acid chain; its full sequence is Chaperone protein DnaK (647 aa).

Residue T198 is modified to Phosphothreonine; by autocatalysis. The interval 606–634 is disordered; the sequence is GASAEGMDPNQFQQGADNAGESNQADDDV. Residues 615–628 show a composition bias toward polar residues; it reads NQFQQGADNAGESN.

Belongs to the heat shock protein 70 family.

Its function is as follows. Acts as a chaperone. In Psychrobacter cryohalolentis (strain ATCC BAA-1226 / DSM 17306 / VKM B-2378 / K5), this protein is Chaperone protein DnaK.